Consider the following 399-residue polypeptide: F-box/kelch-repeat protein At5g48980 (399 aa).

Over residues 1 to 11 (MADSQRLSTAS) the composition is skewed to polar residues. The tract at residues 1–29 (MADSQRLSTASGVKDGQPPWKKKKLSNDT) is disordered. An F-box domain is found at 29–75 (TTSNPSLPYDVILIILARVSRSYYTNLSLVSKSFRSILTSPELYKTR). The stretch at 199 to 248 (IVYLPGSFESPDSLNCVEVYNTMTQTWKPVPPEKRMFKLENLEKKIYYKS) is one Kelch repeat.

This Arabidopsis thaliana (Mouse-ear cress) protein is F-box/kelch-repeat protein At5g48980.